A 39-amino-acid chain; its full sequence is Beta-theraphotoxin-Cm2a (39 aa).

Intrachain disulfides connect Cys7–Cys21, Cys14–Cys26, and Cys20–Cys33. A Phenylalanine amide modification is found at Phe39.

In terms of tissue distribution, expressed by the venom gland.

The protein localises to the secreted. Functionally, inhibits mammalian voltage-gated sodium channel subtypes Nav1.5/SCN5A and Nav1.8/SCN10A by shifting the voltage dependence of channel activation to more depolarized potentials and by blocking the inward component of the sodium current. In vivo, this toxin causes erect, elevated tail, initial partial ataxia, followed by recovery over approximately 1 hour after injection and the progressive development of shaking. Although paralysis subsides, the body tremors never cease and persist until the end of the experiment. The chain is Beta-theraphotoxin-Cm2a from Ceratogyrus marshalli (Straighthorned baboon tarantula).